A 446-amino-acid polypeptide reads, in one-letter code: Putative hydrolase YbfO (446 aa).

The first 28 residues, 1–28 (MKRMIVRMTLPLLIVCLAFSSFSASARA), serve as a signal peptide directing secretion.

The sequence is that of Putative hydrolase YbfO (ybfO) from Bacillus subtilis (strain 168).